The primary structure comprises 135 residues: Small ribosomal subunit protein uS9 (135 aa).

Positions 108–118 are enriched in basic and acidic residues; that stretch reads VGDSRRTEPHK. Residues 108–135 are disordered; it reads VGDSRRTEPHKPNRSTKGPRAKRQKSYR. Residues 119–135 are compositionally biased toward basic residues; sequence PNRSTKGPRAKRQKSYR.

The protein belongs to the universal ribosomal protein uS9 family. In terms of assembly, part of the 30S ribosomal subunit.

The protein is Small ribosomal subunit protein uS9 of Thermococcus kodakarensis (strain ATCC BAA-918 / JCM 12380 / KOD1) (Pyrococcus kodakaraensis (strain KOD1)).